A 98-amino-acid chain; its full sequence is NADH-ubiquinone oxidoreductase chain 4L (98 aa).

3 consecutive transmembrane segments (helical) span residues 1 to 21 (MMSINLNLIMAFSLALAGVLI), 28 to 48 (STLLCLEGMMLSLFILMALII), and 59 to 79 (APLILLVFSACEAGVGLALLV).

Belongs to the complex I subunit 4L family. In terms of assembly, core subunit of respiratory chain NADH dehydrogenase (Complex I) which is composed of 45 different subunits.

Its subcellular location is the mitochondrion inner membrane. The catalysed reaction is a ubiquinone + NADH + 5 H(+)(in) = a ubiquinol + NAD(+) + 4 H(+)(out). In terms of biological role, core subunit of the mitochondrial membrane respiratory chain NADH dehydrogenase (Complex I) which catalyzes electron transfer from NADH through the respiratory chain, using ubiquinone as an electron acceptor. Part of the enzyme membrane arm which is embedded in the lipid bilayer and involved in proton translocation. This is NADH-ubiquinone oxidoreductase chain 4L (MT-ND4L) from Lagostrophus fasciatus (Banded hare-wallaby).